Here is a 180-residue protein sequence, read N- to C-terminus: Endoribonuclease YbeY (180 aa).

The Zn(2+) site is built by histidine 118, histidine 122, and histidine 128.

Belongs to the endoribonuclease YbeY family. It depends on Zn(2+) as a cofactor.

The protein resides in the cytoplasm. In terms of biological role, single strand-specific metallo-endoribonuclease involved in late-stage 70S ribosome quality control and in maturation of the 3' terminus of the 16S rRNA. The sequence is that of Endoribonuclease YbeY from Rhodococcus erythropolis (strain PR4 / NBRC 100887).